We begin with the raw amino-acid sequence, 742 residues long: Protein CdcH (742 aa).

ATP-binding positions include 230 to 237 and 503 to 510; these read GPPGTGKT. The disordered stretch occupies residues 722-742; sequence FKGSQGPNVNSRQGSEHIGFQ. Positions 723 to 734 are enriched in polar residues; that stretch reads KGSQGPNVNSRQ.

This sequence belongs to the AAA ATPase family. CDC48 subfamily.

Functionally, may be part of a transduction pathway connecting light to cell division. The protein is Protein CdcH (cdcH) of Halobacterium salinarum (strain ATCC 700922 / JCM 11081 / NRC-1) (Halobacterium halobium).